A 428-amino-acid polypeptide reads, in one-letter code: Histidinol dehydrogenase (428 aa).

Residues tyrosine 124, glutamine 186, and asparagine 209 each coordinate NAD(+). Substrate is bound by residues serine 233, glutamine 255, and histidine 258. 2 residues coordinate Zn(2+): glutamine 255 and histidine 258. Catalysis depends on proton acceptor residues glutamate 322 and histidine 323. Residues histidine 323, aspartate 356, glutamate 410, and histidine 415 each coordinate substrate. Zn(2+) is bound at residue aspartate 356. Histidine 415 lines the Zn(2+) pocket.

The protein belongs to the histidinol dehydrogenase family. Zn(2+) serves as cofactor.

It carries out the reaction L-histidinol + 2 NAD(+) + H2O = L-histidine + 2 NADH + 3 H(+). It participates in amino-acid biosynthesis; L-histidine biosynthesis; L-histidine from 5-phospho-alpha-D-ribose 1-diphosphate: step 9/9. Its function is as follows. Catalyzes the sequential NAD-dependent oxidations of L-histidinol to L-histidinaldehyde and then to L-histidine. The chain is Histidinol dehydrogenase from Bacteroides fragilis (strain ATCC 25285 / DSM 2151 / CCUG 4856 / JCM 11019 / LMG 10263 / NCTC 9343 / Onslow / VPI 2553 / EN-2).